We begin with the raw amino-acid sequence, 71 residues long: Small integral membrane protein 31 (71 aa).

Residues 8 to 28 traverse the membrane as a helical segment; the sequence is LEMAFILLAFVIFSLFTLASI. The interval 31–71 is disordered; that stretch reads TPDDSNEEEEHEKKGREKKRKKSEKKKNCSEEEHRIEAVEL. A compositionally biased stretch (basic residues) spans 46–55; that stretch reads REKKRKKSEK. The span at 56–71 shows a compositional bias: basic and acidic residues; that stretch reads KKNCSEEEHRIEAVEL. Asn58 carries N-linked (GlcNAc...) asparagine glycosylation.

It localises to the membrane. The sequence is that of Small integral membrane protein 31 from Homo sapiens (Human).